Reading from the N-terminus, the 412-residue chain is Inositol polyphosphate-5-phosphatase A (412 aa).

Residue Cys-409 is the site of S-farnesyl cysteine attachment. Residues 410-412 (VVQ) constitute a propeptide, removed in mature form.

Belongs to the inositol 1,4,5-trisphosphate 5-phosphatase type I family. In terms of assembly, interacts with TASOR. In terms of processing, isoprenylation at Cys-409 is required for localization at the membrane. In terms of tissue distribution, predominantly expressed in heart, brain, and skeletal muscle. In brain; high level in Purkinje cells.

It localises to the cell membrane. It is found in the cell projection. Its subcellular location is the dendrite. The enzyme catalyses 1D-myo-inositol 1,4,5-trisphosphate + H2O = 1D-myo-inositol 1,4-bisphosphate + phosphate. It catalyses the reaction 1D-myo-inositol 1,3,4,5-tetrakisphosphate + H2O = 1D-myo-inositol 1,3,4-trisphosphate + phosphate. Its function is as follows. Phosphatase that specifically hydrolyzes the 5-phosphate of inositol 1,4,5-trisphosphate to inositol 1,4-bisphosphate, and inositol 1,3,4,5-tetrasphosphate to inositol 1,3,4-trisphosphate. Plays a crucial role in the survival of cerebellar Purkinje cells. The chain is Inositol polyphosphate-5-phosphatase A from Homo sapiens (Human).